The following is a 307-amino-acid chain: Transcription initiation factor IIF subunit beta (307 aa).

Basic and acidic residues predominate over residues 1–12 (MSEEKPTVRTEE). Disordered regions lie at residues 1 to 22 (MSEE…DAGD) and 261 to 307 (VELR…IDVV). The span at 13–22 (DDRYEDDAGD) shows a compositional bias: acidic residues. Polar residues predominate over residues 263–290 (LRNQQASQSESSSIDHTGKNTSPDNPGT). The segment covering 292–307 (AEEDEDDDGVEMIDVV) has biased composition (acidic residues).

It belongs to the TFIIF beta subunit family. In terms of assembly, component of the fcp1/TFIIF/polII complex via interaction of tfg3 with both tfg1/TFIIF-alpha and tfg2/TFIIF-beta subunits.

The protein resides in the nucleus. TFIIF is a general transcription initiation factor that binds to RNA polymerase II and helps to recruit it to the initiation complex in collaboration with TFIIB. It promotes transcription elongation. The sequence is that of Transcription initiation factor IIF subunit beta (tfg2) from Schizosaccharomyces pombe (strain 972 / ATCC 24843) (Fission yeast).